Reading from the N-terminus, the 686-residue chain is Cyclic nucleotide-gated channel alpha-1 (686 aa).

At 1-165 (MKNNIINTQQ…PSGNTYYNWL (165 aa)) the chain is on the cytoplasmic side. 2 disordered regions span residues 31–75 (ENGA…PSQR) and 87–149 (NVNN…EEKK). The segment covering 39–53 (SEDDDSASTSEESEN) has biased composition (acidic residues). Residues 110 to 124 (SKSDDKNENKNDPEK) are compositionally biased toward basic and acidic residues. Residues 125 to 134 (KKKKKDKEKK) show a composition bias toward basic residues. The span at 135–149 (KKEEKSKDKKEEEKK) shows a compositional bias: basic and acidic residues. Residues 166 to 187 (FCITLPVMYNWTMVIARACFDE) form a helical membrane-spanning segment. The Extracellular portion of the chain corresponds to 188–197 (LQSDYLEYWL). Residues 198–218 (ILDYVSDIVYLIDMFVRTRTG) form a helical membrane-spanning segment. At 219-243 (YLEQGLLVKEELKLINKYKSNLQFK) the chain is on the cytoplasmic side. A helical transmembrane segment spans residues 244–262 (LDVLSLIPTDLLYFKLGWN). The Extracellular portion of the chain corresponds to 263–267 (YPEIR). Residues 268-286 (LNRLLRFSRMFEFFQRTET) traverse the membrane as a helical segment. Residues 287–293 (RTNYPNI) lie on the Cytoplasmic side of the membrane. The interval 291-399 (PNIFRISNLV…GNIGSMISNM (109 aa)) is ion conduction pathway. Residues 294-317 (FRISNLVMYIVIIIHWNACVFYSI) traverse the membrane as a helical segment. Topologically, residues 318 to 340 (SKAIGFGNDTWVYPDINDPEFGR) are extracellular. Asn325 is a glycosylation site (N-linked (GlcNAc...) asparagine). The next 2 membrane-spanning stretches (helical) occupy residues 341–375 (LARK…VFVV) and 376–400 (VDFL…SNMN). Positions 358 to 361 (TIGE) are selectivity filter. The tract at residues 401–477 (AARAEFQARI…DTLKKVRIFA (77 aa)) is C-linker. At 401–686 (AARAEFQARI…GAESGPIDST (286 aa)) the chain is on the cytoplasmic side. Residues 481 to 601 (AGLLVELVLK…EEKGKQILMK (121 aa)) are cyclic nucleotide-binding domain. 3',5'-cyclic GMP is bound by residues Gly541, Ser544, Arg557, and Thr558. 3',5'-cyclic AMP is bound by residues Arg557 and Thr558. A coiled-coil region spans residues 619–673 (LEEKVTRMEGSVDLLQTRFARILAEYESMQQKLKQRLTKVEKFLKPLIDTEFSSI).

The protein belongs to the cyclic nucleotide-gated cation channel (TC 1.A.1.5) family. CNGA1 subfamily. In terms of assembly, forms heterotetrameric channels composed of CNGA1 and CNGB1 subunits with 3:1 stoichiometry. May also form cyclic nucleotide-activated homotetrameric channels, that are efficiently activated by saturating cGMP, but poorly activated by saturating cAMP compared to the heterotetramer with CNGB1. The channel binds Ca(2+)-bound CALM1 via CaM1 and CaM2 regions of the CNGB1 subunit; this interaction modulates the affinity of the channel for cNMPs in response to intracellular Ca(2+) levels. Rod cells in the retina.

Its subcellular location is the cell membrane. The enzyme catalyses Ca(2+)(in) = Ca(2+)(out). The catalysed reaction is Na(+)(in) = Na(+)(out). It carries out the reaction K(+)(in) = K(+)(out). It catalyses the reaction NH4(+)(in) = NH4(+)(out). The enzyme catalyses Rb(+)(in) = Rb(+)(out). The catalysed reaction is Li(+)(in) = Li(+)(out). It carries out the reaction Cs(+)(in) = Cs(+)(out). Its activity is regulated as follows. Channel opening is activated by cGMP and at a much lesser extent by cAMP. Ca(2+) binding concominantly blocks monovalent cation currents. Inhibited by L-cis-diltiazem. Pore-forming subunit of the rod cyclic nucleotide-gated channel. Mediates rod photoresponses at dim light converting transient changes in intracellular cGMP levels into electrical signals. In the dark, cGMP levels are high and keep the channel open enabling a steady inward current carried by Na(+) and Ca(2+) ions that leads to membrane depolarization and neurotransmitter release from synaptic terminals. Upon photon absorption cGMP levels decline leading to channel closure and membrane hyperpolarization that ultimately slows neurotransmitter release and signals the presence of light, the end point of the phototransduction cascade. Conducts cGMP- and cAMP-gated ion currents, with permeability for monovalent and divalent cations. The selectivity for Ca(2+) over Na(+) increases with cGMP concentrations, whereas the selectivity among monovalent ions is independent of the cGMP levels. The polypeptide is Cyclic nucleotide-gated channel alpha-1 (Homo sapiens (Human)).